Reading from the N-terminus, the 251-residue chain is Imidazole glycerol phosphate synthase subunit HisF (251 aa).

Active-site residues include aspartate 11 and aspartate 130.

Belongs to the HisA/HisF family. As to quaternary structure, heterodimer of HisH and HisF.

It localises to the cytoplasm. The enzyme catalyses 5-[(5-phospho-1-deoxy-D-ribulos-1-ylimino)methylamino]-1-(5-phospho-beta-D-ribosyl)imidazole-4-carboxamide + L-glutamine = D-erythro-1-(imidazol-4-yl)glycerol 3-phosphate + 5-amino-1-(5-phospho-beta-D-ribosyl)imidazole-4-carboxamide + L-glutamate + H(+). It participates in amino-acid biosynthesis; L-histidine biosynthesis; L-histidine from 5-phospho-alpha-D-ribose 1-diphosphate: step 5/9. Its function is as follows. IGPS catalyzes the conversion of PRFAR and glutamine to IGP, AICAR and glutamate. The HisF subunit catalyzes the cyclization activity that produces IGP and AICAR from PRFAR using the ammonia provided by the HisH subunit. The polypeptide is Imidazole glycerol phosphate synthase subunit HisF (Cytophaga hutchinsonii (strain ATCC 33406 / DSM 1761 / CIP 103989 / NBRC 15051 / NCIMB 9469 / D465)).